The following is a 901-amino-acid chain: Core protein VP3 (901 aa).

The protein belongs to the orbivirus VP3 family.

It is found in the virion. Functionally, the VP3 protein is one of the five proteins (with VP1, VP4, VP6 and VP7) which form the inner capsid of the virus. In Bluetongue virus 11 (isolate USA) (BTV 11), this protein is Core protein VP3 (Segment-3).